A 757-amino-acid polypeptide reads, in one-letter code: RNA cytosine C(5)-methyltransferase NSUN2 (757 aa).

Residues 1-35 (MGRRARGRRFQQPPQPEGEEDASDGGRKRGQAGWE) are disordered. Ser-23 is modified (phosphoserine). Lys-46 participates in a covalent cross-link: Glycyl lysine isopeptide (Lys-Gly) (interchain with G-Cter in SUMO2). A Phosphoserine; by AURKB modification is found at Ser-139. S-adenosyl-L-methionine contacts are provided by residues 184–190 (CAAPGSK), Asp-215, Asp-242, and Asp-268. Cys-321 serves as the catalytic Nucleophile. Residues 436–504 (NKRQPKVQNK…EKKDGVCGPP (69 aa)) form a disordered region. A phosphoserine mark is found at Ser-456 and Ser-473. Over residues 463 to 476 (GNPSDQSELESQMI) the composition is skewed to polar residues. Residues Lys-510 and Lys-515 each participate in a glycyl lysine isopeptide (Lys-Gly) (interchain with G-Cter in SUMO2) cross-link. Lys-585 bears the N6-acetyllysine; alternate mark. The residue at position 585 (Lys-585) is an N6-malonyllysine; alternate. A Glycyl lysine isopeptide (Lys-Gly) (interchain with G-Cter in SUMO2); alternate cross-link involves residue Lys-585. The residue at position 592 (Ser-592) is a Phosphoserine. Residues Lys-639, Lys-653, and Lys-659 each participate in a glycyl lysine isopeptide (Lys-Gly) (interchain with G-Cter in SUMO2) cross-link. Positions 716–757 (LTNENAASPEQPGDEDAKQTAQDPCVPDSVPGCDAAAAEPSR) are disordered. Thr-717 is modified (phosphothreonine). Phosphoserine is present on Ser-723.

Belongs to the class I-like SAM-binding methyltransferase superfamily. RsmB/NOP family. TRM4 subfamily. Interacts with NPM1 and NCL during interphase; interaction is disrupted following phosphorylation at Ser-139. In terms of processing, phosphorylated at Ser-139 by AURKB during mitosis, leading to abolish methyltransferase activity and the interaction with NPM1. As to expression, ubiquitously expressed at low level. Up-regulated in tumors. Dynamically expressed during morphogenesis and in adult skin: in adult skin, expression is up-regulated in the bulge and hair germ as soon as the hair follicle enters its growing phase (anagen). During anagen, expressed at highest level in cells of the hair germ that give rise to the hair matrix.

The protein localises to the nucleus. It is found in the nucleolus. It localises to the cytoplasm. Its subcellular location is the mitochondrion. The protein resides in the cytoskeleton. The protein localises to the spindle. It is found in the secreted. It localises to the extracellular exosome. The catalysed reaction is cytidine(48) in tRNA + S-adenosyl-L-methionine = 5-methylcytidine(48) in tRNA + S-adenosyl-L-homocysteine + H(+). It catalyses the reaction cytidine(49) in tRNA + S-adenosyl-L-methionine = 5-methylcytidine(49) in tRNA + S-adenosyl-L-homocysteine + H(+). The enzyme catalyses cytidine(50) in tRNA + S-adenosyl-L-methionine = 5-methylcytidine(50) in tRNA + S-adenosyl-L-homocysteine + H(+). It carries out the reaction cytidine(34) in tRNA precursor + S-adenosyl-L-methionine = 5-methylcytidine(34) in tRNA precursor + S-adenosyl-L-homocysteine + H(+). The catalysed reaction is a cytidine in mRNA + S-adenosyl-L-methionine = a 5-methylcytidine in mRNA + S-adenosyl-L-homocysteine + H(+). Inhibited by magnesium ions. Functionally, RNA cytosine C(5)-methyltransferase that methylates cytosine to 5-methylcytosine (m5C) in various RNAs, such as tRNAs, mRNAs and some long non-coding RNAs (lncRNAs). Involved in various processes, such as epidermal stem cell differentiation, testis differentiation and maternal to zygotic transition during early development: acts by increasing protein synthesis; cytosine C(5)-methylation promoting tRNA stability and preventing mRNA decay. Methylates cytosine to 5-methylcytosine (m5C) at positions 34 and 48 of intron-containing tRNA(Leu)(CAA) precursors, and at positions 48, 49 and 50 of tRNA(Gly)(GCC) precursors. tRNA methylation is required generation of RNA fragments derived from tRNAs (tRFs). Also mediates C(5)-methylation of mitochondrial tRNAs. Catalyzes cytosine C(5)-methylation of mRNAs, leading to stabilize them and prevent mRNA decay: mRNA stabilization involves YBX1 that specifically recognizes and binds m5C-modified transcripts. Cytosine C(5)-methylation of mRNAs also regulates mRNA export: methylated transcripts are specifically recognized by THOC4/ALYREF, which mediates mRNA nucleo-cytoplasmic shuttling. Also mediates cytosine C(5)-methylation of non-coding RNAs, such as vault RNAs (vtRNAs), promoting their processing into regulatory small RNAs. Cytosine C(5)-methylation of vtRNA VTRNA1.1 promotes its processing into small-vault RNA4 (svRNA4) and regulates epidermal differentiation. May act downstream of Myc to regulate epidermal cell growth and proliferation. Required for proper spindle assembly and chromosome segregation, independently of its methyltransferase activity. The sequence is that of RNA cytosine C(5)-methyltransferase NSUN2 from Mus musculus (Mouse).